A 410-amino-acid polypeptide reads, in one-letter code: Adenosylhomocysteinase (410 aa).

Asp117 and Glu142 together coordinate substrate. Residue 143–145 (TTT) participates in NAD(+) binding. Substrate is bound by residues Lys172 and Asp176. NAD(+) is bound by residues Asn177, 206–211 (GYGYCG), Glu229, 285–287 (AGH), and Asn332.

The protein belongs to the adenosylhomocysteinase family. NAD(+) is required as a cofactor.

Its subcellular location is the cytoplasm. The enzyme catalyses S-adenosyl-L-homocysteine + H2O = L-homocysteine + adenosine. The protein operates within amino-acid biosynthesis; L-homocysteine biosynthesis; L-homocysteine from S-adenosyl-L-homocysteine: step 1/1. May play a key role in the regulation of the intracellular concentration of adenosylhomocysteine. The chain is Adenosylhomocysteinase from Thermoplasma acidophilum (strain ATCC 25905 / DSM 1728 / JCM 9062 / NBRC 15155 / AMRC-C165).